A 205-amino-acid polypeptide reads, in one-letter code: Red chlorophyll catabolite reductase (205 aa).

Substrate-binding residues include Glu39 and Asp175.

As to quaternary structure, homodimer. The N-terminus is blocked. As to expression, in etiolated and green primary leaves. Low amount in roots.

Its subcellular location is the plastid. It localises to the chloroplast stroma. It catalyses the reaction primary fluorescent chlorophyll catabolite + 2 oxidized [2Fe-2S]-[ferredoxin] = red chlorophyll catabolite + 2 reduced [2Fe-2S]-[ferredoxin] + 3 H(+). It functions in the pathway porphyrin-containing compound metabolism; chlorophyll degradation. Catalyzes the key reaction of chlorophyll catabolism, porphyrin macrocycle cleavage of pheophorbide a (pheide a) to a primary fluorescent catabolite (pFCC). Works in a two-step reaction with pheophorbide a oxygenase (PaO) by reducing the C20/C1 double bond of the intermediate, RCC. This Hordeum vulgare (Barley) protein is Red chlorophyll catabolite reductase (rccR).